The sequence spans 349 residues: tRNA pseudouridine synthase D (349 aa).

Phenylalanine 26 contributes to the substrate binding site. The active-site Nucleophile is aspartate 79. Asparagine 128 contacts substrate. One can recognise a TRUD domain in the interval 154-303 (GVPNYFGSQR…VDAARRAMLV (150 aa)). Phenylalanine 329 contributes to the substrate binding site.

The protein belongs to the pseudouridine synthase TruD family.

It carries out the reaction uridine(13) in tRNA = pseudouridine(13) in tRNA. In terms of biological role, responsible for synthesis of pseudouridine from uracil-13 in transfer RNAs. The protein is tRNA pseudouridine synthase D of Erwinia tasmaniensis (strain DSM 17950 / CFBP 7177 / CIP 109463 / NCPPB 4357 / Et1/99).